A 279-amino-acid polypeptide reads, in one-letter code: Large ribosomal subunit protein mL46 (279 aa).

Lysine 230 carries the N6-acetyllysine modification.

The protein belongs to the mitochondrion-specific ribosomal protein mL46 family. In terms of assembly, component of the mitochondrial ribosome large subunit (39S) which comprises a 16S rRNA and about 50 distinct proteins.

Its subcellular location is the mitochondrion. This chain is Large ribosomal subunit protein mL46 (MRPL46), found in Pongo abelii (Sumatran orangutan).